A 196-amino-acid polypeptide reads, in one-letter code: MEIDLLQYEKKYQEYIVAGIDEAGRGPLAGPVVASAVVIDNTNIITGIKDSKKLSKRKRELLYEQITSNYIWSTAIISHTEIDEINILEATKKACSIAAANLTIKPEIVLVDGNMQFNDKRFVSIIKGDNLSLSIAAASIVAKITRDRLMLDLSTEFPQYLWYKNSGYGTKEHIQAINTHGLSPYHRKSFRYSCFI.

The 182-residue stretch at Tyr-15–Ile-196 folds into the RNase H type-2 domain. Residues Asp-21, Glu-22, and Asp-112 each contribute to the a divalent metal cation site.

It belongs to the RNase HII family. Requires Mn(2+) as cofactor. Mg(2+) serves as cofactor.

It is found in the cytoplasm. It carries out the reaction Endonucleolytic cleavage to 5'-phosphomonoester.. Endonuclease that specifically degrades the RNA of RNA-DNA hybrids. This chain is Ribonuclease HII, found in Rickettsia canadensis (strain McKiel).